The sequence spans 290 residues: NAD kinase (290 aa).

D72 serves as the catalytic Proton acceptor. NAD(+) contacts are provided by residues 72-73 (DG), 146-147 (NE), R174, D176, and 187-192 (TAYALS).

The protein belongs to the NAD kinase family. A divalent metal cation serves as cofactor.

Its subcellular location is the cytoplasm. The enzyme catalyses NAD(+) + ATP = ADP + NADP(+) + H(+). Its function is as follows. Involved in the regulation of the intracellular balance of NAD and NADP, and is a key enzyme in the biosynthesis of NADP. Catalyzes specifically the phosphorylation on 2'-hydroxyl of the adenosine moiety of NAD to yield NADP. The polypeptide is NAD kinase (Methylococcus capsulatus (strain ATCC 33009 / NCIMB 11132 / Bath)).